A 340-amino-acid polypeptide reads, in one-letter code: Glyceraldehyde-3-phosphate dehydrogenase (340 aa).

Residues 11–12 (SI) and Gly111 each bind NAD(+). D-glyceraldehyde 3-phosphate is bound at residue 140-142 (SCN). The Nucleophile role is filled by Cys141. Residue Arg169 participates in NAD(+) binding. 195–196 (HG) is a D-glyceraldehyde 3-phosphate binding site. Position 303 (Gln303) interacts with NAD(+).

This sequence belongs to the glyceraldehyde-3-phosphate dehydrogenase family. In terms of assembly, homotetramer.

The protein resides in the cytoplasm. The catalysed reaction is D-glyceraldehyde 3-phosphate + phosphate + NADP(+) = (2R)-3-phospho-glyceroyl phosphate + NADPH + H(+). It carries out the reaction D-glyceraldehyde 3-phosphate + phosphate + NAD(+) = (2R)-3-phospho-glyceroyl phosphate + NADH + H(+). It functions in the pathway carbohydrate degradation; glycolysis; pyruvate from D-glyceraldehyde 3-phosphate: step 1/5. The sequence is that of Glyceraldehyde-3-phosphate dehydrogenase from Methanococcus vannielii (strain ATCC 35089 / DSM 1224 / JCM 13029 / OCM 148 / SB).